A 28-amino-acid chain; its full sequence is ALWKDILKNVGKAAGKAVLNTVTDMVNQ.

Glutamine amide is present on Gln-28.

It belongs to the frog skin active peptide (FSAP) family. Dermaseptin subfamily. Expressed by the skin glands.

It localises to the secreted. Its function is as follows. Antimicrobial peptide with activity against the Gram-positive bacterium S.aureus, and the Gram-negative bacteria E.coli and P.aeruginosa. Probably acts by disturbing membrane functions with its amphipathic structure. Has an activity of stimulation of insulin release, which may protect the species from being eaten by predators by causing fatal hypoglycemia. Has hemolytic activity (60% hemolysis at 128 ug/ml). This Phyllomedusa tarsius (Brownbelly leaf frog) protein is Dermaseptin-2.